Reading from the N-terminus, the 1276-residue chain is Sterol regulatory element-binding protein cleavage-activating protein (1276 aa).

Residues 1–18 (MTLTERLREKISQAFYNH) are Cytoplasmic-facing. Residues 19–39 (GLLCASYPIPIILFTGLCILA) form a helical membrane-spanning segment. Over 40–279 (CCYPLLKLPL…NLVHVHFKEE (240 aa)) the chain is Lumenal. Positions 46 to 284 (KLPLPGTGPV…HFKEEIGIAE (239 aa)) are loop-1. The disordered stretch occupies residues 60 to 81 (PVKGYSPPPADSDHKQGEPSEQ). Residue Asn-263 is glycosylated (N-linked (GlcNAc...) asparagine). Residues 280 to 300 (IGIAELIPLVTTYIILFAYIY) traverse the membrane as a helical segment. The 159-residue stretch at 284-442 (ELIPLVTTYI…MLFFTTVLSI (159 aa)) folds into the SSD domain. The Cytoplasmic portion of the chain corresponds to 301 to 312 (FSTRKIDMVKSK). The helical transmembrane segment at 313–333 (WGLALAAVVTVLSSLLMSVGL) threads the bilayer. Over 334-344 (CTLFGLTPTLN) the chain is Lumenal. Residues 345-365 (GGEIFPYLVVVIGLENVLVLT) traverse the membrane as a helical segment. Topologically, residues 366–401 (KSVVSTPVDLEVKLRIAQGLSSESWSIMKNVATELG) are cytoplasmic. A helical membrane pass occupies residues 402-422 (IILIGYFTLVPAIQEFCLFAV). Val-423 is a topological domain (lumenal). Residues 424–444 (GLVSDFFLQMLFFTTVLSIDI) traverse the membrane as a helical segment. At 445–518 (RRMELADLNK…FLARTRLAQR (74 aa)) the chain is on the cytoplasmic side. An ER export signal motif is present at residues 447 to 452 (MELADL). Glycyl lysine isopeptide (Lys-Gly) (interchain with G-Cter in ubiquitin) cross-links involve residues Lys-454 and Lys-466. Residues 519–539 (LIMAGTVVWIGILVYTDPAGL) form a helical membrane-spanning segment. Positions 535–710 (DPAGLRTYLA…QTHGDITLYK (176 aa)) are loop-7. At 540-707 (RTYLAAQVTE…GGTQTHGDIT (168 aa)) the chain is on the lumenal side. N-linked (GlcNAc...) asparagine glycans are attached at residues Asn-590 and Asn-641. The helical transmembrane segment at 708 to 728 (LYKVAALGLAAGIVLVLLLLC) threads the bilayer. Over 729-1276 (LYRVLCPRNY…YVPSVLEKLD (548 aa)) the chain is Cytoplasmic. The tract at residues 731 to 1276 (RVLCPRNYGQ…YVPSVLEKLD (546 aa)) is interaction with SREBF2. The WD 1 repeat unit spans residues 771–811 (VLRGHLMDIECLASDGMLLVSCCLAGQVCVWDAQTGDCLTR). Phosphoserine is present on residues Ser-821, Ser-837, Ser-843, Ser-850, Ser-905, and Ser-934. The disordered stretch occupies residues 834–903 (ERLSDGGKAS…RHRAGCGRSR (70 aa)). A disordered region spans residues 928 to 958 (SALRPPSPGPPLPQASQEEGTAPEKGSPPLA). WD repeat units lie at residues 949-999 (APEK…LCCS) and 1002-1039 (EISSGITALVFLDRRIVAARLNGSLDFFSLETHTSLSP). Arg-1048 carries the post-translational modification Omega-N-methylarginine. WD repeat units lie at residues 1074 to 1111 (AHQKPITALRAAAGRLVTGSQDHTLRVFRLEDSCCLFT), 1114 to 1152 (GHSGAITTVYIDQTMVLASGGQDGAICLWDVLTGSRVSH), 1155 to 1192 (AHRGDVTSLTCTTSCVISSGLDDFINIWDRSTGIKLYS), and 1194 to 1232 (QQDLGCGASLGVISDNLLVTGGQGCVSFWDLNYGDLLQT).

It belongs to the WD repeat SCAP family. As to quaternary structure, membrane region forms a homotetramer. Component of the SCAP-SREBP complex (composed of SCAP and SREBF1/SREBP1 or SREBF2/SREBP2); interacts with SREBF1/SREBP1 or SREBF2/SREBP2 through its C-terminal cytoplasmic domain. Forms a ternary complex with INSIG1 or INSIG2 through its transmembrane domains at high sterol concentrations. Interacts with PAQR3; the interaction anchors the SCAP-SREBP complex to the Golgi apparatus in low cholesterol conditions. Interacts with the SEC23-SEC24 complex in a SAR1-GTP-dependent manner through an ER export signal in its third cytoplasmic loop. Interacts with RNF139; the interaction inhibits the interaction of SCAP with SEC24B and hampering the ER to Golgi transport of the SCAP-SREBP complex. Interacts with SPRING1. In terms of processing, ubiquitinated at Lys-454 and Lys-466. RNF145 triggers ubiquitination of SCAP, likely inhibiting SCAP-SREBP complex transport to the Golgi apparatus and the subsequent processing/maturation of SREBF2/SREBP2.

It localises to the endoplasmic reticulum membrane. The protein localises to the golgi apparatus membrane. It is found in the cytoplasmic vesicle. The protein resides in the COPII-coated vesicle membrane. Its function is as follows. Escort protein required for cholesterol as well as lipid homeostasis. Regulates export of the SCAP-SREBP complex from the endoplasmic reticulum to the Golgi upon low cholesterol, thereby regulating the processing of sterol regulatory element-binding proteins (SREBPs) SREBF1/SREBP1 and SREBF2/SREBP2. At high sterol concentrations, formation of a ternary complex with INSIG (INSIG1 or INSIG2) leads to mask the ER export signal in SCAP, promoting retention of the complex in the endoplasmic reticulum. Low sterol concentrations trigger release of INSIG, a conformational change in the SSD domain of SCAP, unmasking of the ER export signal, promoting recruitment into COPII-coated vesicles and transport of the SCAP-SREBP to the Golgi: in the Golgi, SREBPs are then processed, releasing the transcription factor fragment of SREBPs from the membrane, its import into the nucleus and up-regulation of LDLR, INSIG1 and the mevalonate pathway. Binds cholesterol via its SSD domain. This chain is Sterol regulatory element-binding protein cleavage-activating protein, found in Rattus norvegicus (Rat).